The chain runs to 412 residues: Tryptophan synthase beta chain (412 aa).

An N6-(pyridoxal phosphate)lysine modification is found at lysine 92.

The protein belongs to the TrpB family. In terms of assembly, tetramer of two alpha and two beta chains. The cofactor is pyridoxal 5'-phosphate.

It carries out the reaction (1S,2R)-1-C-(indol-3-yl)glycerol 3-phosphate + L-serine = D-glyceraldehyde 3-phosphate + L-tryptophan + H2O. Its pathway is amino-acid biosynthesis; L-tryptophan biosynthesis; L-tryptophan from chorismate: step 5/5. The beta subunit is responsible for the synthesis of L-tryptophan from indole and L-serine. This chain is Tryptophan synthase beta chain, found in Methylibium petroleiphilum (strain ATCC BAA-1232 / LMG 22953 / PM1).